Reading from the N-terminus, the 440-residue chain is Muscarinic acetylcholine receptor M2 (440 aa).

Residues 1–19 traverse the membrane as a helical segment; that stretch reads VLVAGSLSLVTIIGNILVM. The Cytoplasmic segment spans residues 20–33; the sequence is VSIKVNRHLQTVNN. Residues 34–54 traverse the membrane as a helical segment; the sequence is YFLFSLACADLIIGVFSMNLY. Over 55 to 71 the chain is Extracellular; that stretch reads TLYTVIGYWPLGPVVCD. A disulfide bridge links Cys70 with Cys150. The helical transmembrane segment at 72 to 93 threads the bilayer; sequence LWLALDYVVSNASVMNLLIISF. The Important for signaling signature appears at 94 to 96; that stretch reads DRY. Over 94 to 113 the chain is Cytoplasmic; it reads DRYFCVTKPLTYPVKRTTKM. Residues 114–136 traverse the membrane as a helical segment; sequence AGMMIAAAWVLSFILWAPAILFW. The Extracellular segment spans residues 137–158; it reads QFIVGVRTVEDGECYIQFFSNA. A helical transmembrane segment spans residues 159-183; the sequence is AVTFGTAIAAFYLPVIIMTVLYWHI. The Cytoplasmic segment spans residues 184-361; sequence SRASKSRIKK…PPSREKKVTR (178 aa). Positions 192–329 are disordered; the sequence is KKDKKEPVAN…VVGSSGQNGD (138 aa). Ser206 carries the post-translational modification Phosphoserine. The segment covering 228-244 has biased composition (basic and acidic residues); that stretch reads GLEHNKIQNGKAPRDPV. Polar residues-rich tracts occupy residues 258–267, 278–287, and 308–327; these read NDSTSVSAVA, DENTVSTSLG, and SDSC…SGQN. The chain crosses the membrane as a helical span at residues 362 to 384; sequence TILAILLAFIITWAPYNVMVLIN. The Extracellular segment spans residues 385 to 392; that stretch reads TFCAPCIP. A disulfide bridge links Cys387 with Cys390. A helical membrane pass occupies residues 393 to 416; it reads NTVWTIGYWLCYINSTINPACYAL. The short motif at 410 to 414 is the Important for signaling element; the sequence is NPACY. Residues 417–440 are Cytoplasmic-facing; it reads CNATFKKTFKHLLMCHYKNIGATR. 3 positions are modified to phosphothreonine: Thr420, Thr424, and Thr439.

The protein belongs to the G-protein coupled receptor 1 family. Muscarinic acetylcholine receptor subfamily. CHRM2 sub-subfamily. As to quaternary structure, interacts with ARRB1 and ARRB2. Interacts with RACK1; the interaction regulates CHRM2 internalization. Phosphorylated in response to agonist treatment.

The protein localises to the cell membrane. Its subcellular location is the postsynaptic cell membrane. Its function is as follows. The muscarinic acetylcholine receptor mediates various cellular responses, including inhibition of adenylate cyclase, breakdown of phosphoinositides and modulation of potassium channels through the action of G proteins. Primary transducing effect is adenylate cyclase inhibition. Signaling promotes phospholipase C activity, leading to the release of inositol trisphosphate (IP3); this then triggers calcium ion release into the cytosol. In Pan troglodytes (Chimpanzee), this protein is Muscarinic acetylcholine receptor M2 (CHRM2).